Reading from the N-terminus, the 127-residue chain is Fluoride-specific ion channel FluC (127 aa).

Transmembrane regions (helical) follow at residues 28-48, 73-93, and 98-118; these read LALF…SLAM, TGVL…ALLI, and VGLA…GLFL. 2 residues coordinate Na(+): G77 and T80.

It belongs to the fluoride channel Fluc/FEX (TC 1.A.43) family.

It localises to the cell inner membrane. It catalyses the reaction fluoride(in) = fluoride(out). Its activity is regulated as follows. Na(+) is not transported, but it plays an essential structural role and its presence is essential for fluoride channel function. In terms of biological role, fluoride-specific ion channel. Important for reducing fluoride concentration in the cell, thus reducing its toxicity. In Beijerinckia indica subsp. indica (strain ATCC 9039 / DSM 1715 / NCIMB 8712), this protein is Fluoride-specific ion channel FluC.